We begin with the raw amino-acid sequence, 152 residues long: Transcriptional regulator MraZ (152 aa).

SpoVT-AbrB domains lie at 5 to 52 (ASAI…PLDE) and 81 to 124 (AHEC…DETA).

Belongs to the MraZ family. Forms oligomers.

It localises to the cytoplasm. Its subcellular location is the nucleoid. The chain is Transcriptional regulator MraZ from Shewanella woodyi (strain ATCC 51908 / MS32).